The following is a 190-amino-acid chain: dTTP/UTP pyrophosphatase (190 aa).

The active-site Proton acceptor is aspartate 71.

Belongs to the Maf family. YhdE subfamily. A divalent metal cation is required as a cofactor.

The protein localises to the cytoplasm. The enzyme catalyses dTTP + H2O = dTMP + diphosphate + H(+). It catalyses the reaction UTP + H2O = UMP + diphosphate + H(+). Nucleoside triphosphate pyrophosphatase that hydrolyzes dTTP and UTP. May have a dual role in cell division arrest and in preventing the incorporation of modified nucleotides into cellular nucleic acids. The sequence is that of dTTP/UTP pyrophosphatase from Xanthomonas oryzae pv. oryzae (strain MAFF 311018).